The primary structure comprises 697 residues: Elongation factor G (697 aa).

A tr-type G domain is found at 10–290 (THFRNIGIAA…AVVDYLPSPL (281 aa)). GTP-binding positions include 19 to 26 (AHIDAGKT), 89 to 93 (DTPGH), and 143 to 146 (NKMD).

This sequence belongs to the TRAFAC class translation factor GTPase superfamily. Classic translation factor GTPase family. EF-G/EF-2 subfamily.

Its subcellular location is the cytoplasm. Its function is as follows. Catalyzes the GTP-dependent ribosomal translocation step during translation elongation. During this step, the ribosome changes from the pre-translocational (PRE) to the post-translocational (POST) state as the newly formed A-site-bound peptidyl-tRNA and P-site-bound deacylated tRNA move to the P and E sites, respectively. Catalyzes the coordinated movement of the two tRNA molecules, the mRNA and conformational changes in the ribosome. This chain is Elongation factor G, found in Deinococcus deserti (strain DSM 17065 / CIP 109153 / LMG 22923 / VCD115).